The following is a 132-amino-acid chain: Transcription antitermination protein NusB (132 aa).

The protein belongs to the NusB family.

In terms of biological role, involved in transcription antitermination. Required for transcription of ribosomal RNA (rRNA) genes. Binds specifically to the boxA antiterminator sequence of the ribosomal RNA (rrn) operons. The chain is Transcription antitermination protein NusB from Campylobacter jejuni subsp. jejuni serotype O:2 (strain ATCC 700819 / NCTC 11168).